A 188-amino-acid chain; its full sequence is Adenine phosphoribosyltransferase (188 aa).

The protein belongs to the purine/pyrimidine phosphoribosyltransferase family. In terms of assembly, homodimer.

Its subcellular location is the cytoplasm. The catalysed reaction is AMP + diphosphate = 5-phospho-alpha-D-ribose 1-diphosphate + adenine. It participates in purine metabolism; AMP biosynthesis via salvage pathway; AMP from adenine: step 1/1. Functionally, catalyzes a salvage reaction resulting in the formation of AMP, that is energically less costly than de novo synthesis. This is Adenine phosphoribosyltransferase from Neisseria meningitidis serogroup C (strain 053442).